A 190-amino-acid polypeptide reads, in one-letter code: Probable chemoreceptor glutamine deamidase CheD (190 aa).

The protein belongs to the CheD family.

The enzyme catalyses L-glutaminyl-[protein] + H2O = L-glutamyl-[protein] + NH4(+). Functionally, probably deamidates glutamine residues to glutamate on methyl-accepting chemotaxis receptors (MCPs), playing an important role in chemotaxis. The protein is Probable chemoreceptor glutamine deamidase CheD of Acidiphilium cryptum (strain JF-5).